The following is a 325-amino-acid chain: Hydroxylase/desaturase poxK (325 aa).

The segment covering 1-12 (MTATATPVPTVA) has biased composition (low complexity). Residues 1-25 (MTATATPVPTVASHAQDITLPPPPK) form a disordered region.

The protein belongs to the asaB hydroxylase/desaturase family.

It participates in secondary metabolite biosynthesis. In terms of biological role, hydroxylase/desaturase; part of the gene cluster that mediates the biosynthesis of oxaleimides, cytotoxic compounds containing an unusual disubstituted succinimide moiety. The first step of the pathway is provided by the HR-PKS poxF that serves in a new mode of collaborative biosynthesis with the PKS-NRPS poxE, by providing the olefin containing amino acid substrate via the synthesis of an ACP-bound dec-4-enoate. The cytochrome P450 monooxygenase poxM-catalyzed oxidation at the alpha-position creates the enzyme-bound 2-hydroxydec-4-enoyl-ACP thioester, which may be prone to spontaneous hydrolysis to yield 2-hydroxydec-4-enoic acid due to increased electrophilicity of the carbonyl. 2-hydroxydec-4-enoic acid can then be further oxidized by poxM to yield the alpha-ketoacid 2-oxodec-4-enoicacid, which is reductively aminated by the aminotransferase poxL to yield (S,E)-2-aminodec-4-enoic acid. The Hybrid PKS-NRPS synthetase poxE then performs condensation between the octaketide product of its PKS modules and the amino group of (S,E)-2-aminodec-4-enoic acid which is activated and incorporated by the adenylation domain. The resulting aminoacyl product can be cyclized by the Diels-Alderase PoxQ and reductively released by the reductive (R) domain of poxE to yield an aldehyde intermediate. The released aldehyde is then substrate for a Knoevenagel condensation by the hydrolyase poxO followed by an oxidation at the 5-position of the pyrrolidone ring. The presence of the olefin from the amino acid building block allows for migration of the substituted allyl group to occur. This allylic transposition reaction takes place in a conjugate addition, semipinacol-like fashion to yield a succinimide intermediate. Iterative two-electron oxidations of the C7 methyl of the succinimide intermediate to the carboxylic acid can be catalyzed by one of two remaining cytochrome P450 monooxygenasess poxC or poxD to yield oxaleimide A. Subsequent oxidation yields the maleimide scaffold oxaleimide I. Both oxaleimide A and oxaleimide I can undergo oxidative modifications in the decalin ring to yield the series of products oxaleimides B to H. The chain is Hydroxylase/desaturase poxK from Penicillium oxalicum (strain 114-2 / CGMCC 5302) (Penicillium decumbens).